Reading from the N-terminus, the 186-residue chain is Elongation factor P (186 aa).

This sequence belongs to the elongation factor P family.

It is found in the cytoplasm. The protein operates within protein biosynthesis; polypeptide chain elongation. Functionally, involved in peptide bond synthesis. Stimulates efficient translation and peptide-bond synthesis on native or reconstituted 70S ribosomes in vitro. Probably functions indirectly by altering the affinity of the ribosome for aminoacyl-tRNA, thus increasing their reactivity as acceptors for peptidyl transferase. The protein is Elongation factor P of Prochlorococcus marinus (strain MIT 9313).